Reading from the N-terminus, the 206-residue chain is Small ribosomal subunit protein uS4 (206 aa).

Residues 96 to 156 enclose the S4 RNA-binding domain; it reads GRLDNVVYRM…EKSKKQARIK (61 aa).

Belongs to the universal ribosomal protein uS4 family. In terms of assembly, part of the 30S ribosomal subunit. Contacts protein S5. The interaction surface between S4 and S5 is involved in control of translational fidelity.

One of the primary rRNA binding proteins, it binds directly to 16S rRNA where it nucleates assembly of the body of the 30S subunit. In terms of biological role, with S5 and S12 plays an important role in translational accuracy. This is Small ribosomal subunit protein uS4 from Haemophilus influenzae (strain ATCC 51907 / DSM 11121 / KW20 / Rd).